The following is a 438-amino-acid chain: Gamma-glutamyl phosphate reductase (438 aa).

Belongs to the gamma-glutamyl phosphate reductase family.

The protein resides in the cytoplasm. The catalysed reaction is L-glutamate 5-semialdehyde + phosphate + NADP(+) = L-glutamyl 5-phosphate + NADPH + H(+). Its pathway is amino-acid biosynthesis; L-proline biosynthesis; L-glutamate 5-semialdehyde from L-glutamate: step 2/2. In terms of biological role, catalyzes the NADPH-dependent reduction of L-glutamate 5-phosphate into L-glutamate 5-semialdehyde and phosphate. The product spontaneously undergoes cyclization to form 1-pyrroline-5-carboxylate. In Prochlorococcus marinus (strain MIT 9303), this protein is Gamma-glutamyl phosphate reductase.